Consider the following 268-residue polypeptide: MLPYPQIDPVALAIGPLKIHWYGLMYLIGIGGAWLLASRRLNRFDPTWNREKLSDLVFWLSMGVIVGGRLGYVLFYDLHAYLANPTLIFEVWKGGMSFHGGFIGVMLAALWFGKRNNKSFFELMDFVAPLVPIGLGAGRIGNFINAELWGKPTDVPWAMIFPPFSDPAQLPRHPSQLYQFALEGVALFVILWLFSRKPRPTMAVSGMFSLCYGIFRFAVEFVRVPDAQLGYIAFGWLTQGQLLCIPMIVGGLVLIWWAYNRKPTAKPA.

The next 7 helical transmembrane spans lie at 10–30, 56–76, 92–112, 120–140, 174–194, 202–222, and 236–256; these read VALA…LIGI, LVFW…VLFY, WKGG…ALWF, FFEL…AGRI, PSQL…LWLF, MAVS…VEFV, and WLTQ…VLIW. Arginine 139 provides a ligand contact to a 1,2-diacyl-sn-glycero-3-phospho-(1'-sn-glycerol).

It belongs to the Lgt family.

It localises to the cell inner membrane. It catalyses the reaction L-cysteinyl-[prolipoprotein] + a 1,2-diacyl-sn-glycero-3-phospho-(1'-sn-glycerol) = an S-1,2-diacyl-sn-glyceryl-L-cysteinyl-[prolipoprotein] + sn-glycerol 1-phosphate + H(+). It functions in the pathway protein modification; lipoprotein biosynthesis (diacylglyceryl transfer). Catalyzes the transfer of the diacylglyceryl group from phosphatidylglycerol to the sulfhydryl group of the N-terminal cysteine of a prolipoprotein, the first step in the formation of mature lipoproteins. This chain is Phosphatidylglycerol--prolipoprotein diacylglyceryl transferase, found in Pseudomonas putida (strain ATCC 47054 / DSM 6125 / CFBP 8728 / NCIMB 11950 / KT2440).